The following is a 160-amino-acid chain: Sulfur-rich protein (160 aa).

Transmembrane regions (helical) follow at residues 62–82 (ITMV…TFVL) and 91–111 (FLFL…SVFM).

The protein resides in the membrane. The chain is Sulfur-rich protein (srp) from Chlamydia caviae (strain ATCC VR-813 / DSM 19441 / 03DC25 / GPIC) (Chlamydophila caviae).